Here is a 497-residue protein sequence, read N- to C-terminus: Cysteine--tRNA ligase (497 aa).

A Zn(2+)-binding site is contributed by C34. The 'HIGH' region motif lies at 36-46; it reads PTVYDFAHIGN. C243, H268, and E272 together coordinate Zn(2+). The 'KMSKS' region signature appears at 301–305; sequence KMAKS. Residue K304 coordinates ATP. The tract at residues 478–497 is disordered; sequence LMDYKDPETGERRTKWEVKR. Residues 480–497 show a composition bias toward basic and acidic residues; it reads DYKDPETGERRTKWEVKR.

It belongs to the class-I aminoacyl-tRNA synthetase family. As to quaternary structure, monomer. It depends on Zn(2+) as a cofactor.

The protein resides in the cytoplasm. The enzyme catalyses tRNA(Cys) + L-cysteine + ATP = L-cysteinyl-tRNA(Cys) + AMP + diphosphate. This Chelativorans sp. (strain BNC1) protein is Cysteine--tRNA ligase.